We begin with the raw amino-acid sequence, 289 residues long: ATP phosphoribosyltransferase (289 aa).

Belongs to the ATP phosphoribosyltransferase family. Long subfamily. It depends on Mg(2+) as a cofactor.

It localises to the cytoplasm. The enzyme catalyses 1-(5-phospho-beta-D-ribosyl)-ATP + diphosphate = 5-phospho-alpha-D-ribose 1-diphosphate + ATP. Its pathway is amino-acid biosynthesis; L-histidine biosynthesis; L-histidine from 5-phospho-alpha-D-ribose 1-diphosphate: step 1/9. Its activity is regulated as follows. Feedback inhibited by histidine. Functionally, catalyzes the condensation of ATP and 5-phosphoribose 1-diphosphate to form N'-(5'-phosphoribosyl)-ATP (PR-ATP). Has a crucial role in the pathway because the rate of histidine biosynthesis seems to be controlled primarily by regulation of HisG enzymatic activity. This chain is ATP phosphoribosyltransferase, found in Methanosarcina acetivorans (strain ATCC 35395 / DSM 2834 / JCM 12185 / C2A).